A 464-amino-acid polypeptide reads, in one-letter code: Argininosuccinate lyase (464 aa).

The protein belongs to the lyase 1 family. Argininosuccinate lyase subfamily.

It localises to the cytoplasm. It carries out the reaction 2-(N(omega)-L-arginino)succinate = fumarate + L-arginine. Its pathway is amino-acid biosynthesis; L-arginine biosynthesis; L-arginine from L-ornithine and carbamoyl phosphate: step 3/3. This chain is Argininosuccinate lyase, found in Azotobacter vinelandii (strain DJ / ATCC BAA-1303).